The sequence spans 546 residues: Chaperonin GroEL (546 aa).

ATP-binding positions include 30–33 (TLGP), Lys51, 87–91 (DGTTT), Gly415, 479–481 (NAA), and Asp495.

Belongs to the chaperonin (HSP60) family. As to quaternary structure, forms a cylinder of 14 subunits composed of two heptameric rings stacked back-to-back. Interacts with the co-chaperonin GroES.

Its subcellular location is the cytoplasm. The catalysed reaction is ATP + H2O + a folded polypeptide = ADP + phosphate + an unfolded polypeptide.. In terms of biological role, together with its co-chaperonin GroES, plays an essential role in assisting protein folding. The GroEL-GroES system forms a nano-cage that allows encapsulation of the non-native substrate proteins and provides a physical environment optimized to promote and accelerate protein folding. The polypeptide is Chaperonin GroEL (Xanthomonas campestris pv. phaseoli).